Reading from the N-terminus, the 282-residue chain is Elongation factor Ts (282 aa).

Residues 79-82 (TDFV) are involved in Mg(2+) ion dislocation from EF-Tu.

The protein belongs to the EF-Ts family.

The protein resides in the cytoplasm. Associates with the EF-Tu.GDP complex and induces the exchange of GDP to GTP. It remains bound to the aminoacyl-tRNA.EF-Tu.GTP complex up to the GTP hydrolysis stage on the ribosome. The protein is Elongation factor Ts of Shewanella loihica (strain ATCC BAA-1088 / PV-4).